A 73-amino-acid chain; its full sequence is Myosin-IB light chain (73 aa).

2 EF-hand domains span residues 3–38 and 38–73; these read DEKT…GLPM and MTEA…VDES. 4 residues coordinate Ca(2+): Asp-16, Asp-18, Asp-20, and Glu-27.

As to quaternary structure, myosin I is a dimer of a heavy and a light chain. Inability to self-assemble into filaments. Interacts with myoB. Does not interact with myoC or myoD.

Its function is as follows. Functions as the light chain for myosin-B. Binds calcium with submicromolar affinity and may sense physiological calcium changes. The polypeptide is Myosin-IB light chain (mlcB) (Dictyostelium discoideum (Social amoeba)).